Here is a 61-residue protein sequence, read N- to C-terminus: Metallothionein-2 (61 aa).

An N-acetylmethionine modification is found at methionine 1. Positions 1–29 (MDPNCSCASDGSCSCAGACKCKQCKCTSC) are beta. A divalent metal cation contacts are provided by cysteine 5, cysteine 7, cysteine 13, cysteine 15, cysteine 19, cysteine 21, cysteine 24, cysteine 26, cysteine 29, cysteine 33, cysteine 34, cysteine 36, cysteine 37, cysteine 41, cysteine 44, cysteine 48, cysteine 50, and cysteine 57. An alpha region spans residues 30–61 (KKSCCSCCPVGCAKCSQGCICKEASDKCSCCA). Serine 58 carries the phosphoserine modification. A divalent metal cation is bound by residues cysteine 59 and cysteine 60.

Belongs to the metallothionein superfamily. Type 1 family.

Its function is as follows. Metallothioneins have a high content of cysteine residues that bind various heavy metals; these proteins are transcriptionally regulated by both heavy metals and glucocorticoids. This Mus musculus (Mouse) protein is Metallothionein-2 (Mt2).